The chain runs to 466 residues: Argininosuccinate lyase (466 aa).

It belongs to the lyase 1 family. Argininosuccinate lyase subfamily.

The protein localises to the cytoplasm. It catalyses the reaction 2-(N(omega)-L-arginino)succinate = fumarate + L-arginine. It participates in amino-acid biosynthesis; L-arginine biosynthesis; L-arginine from L-ornithine and carbamoyl phosphate: step 3/3. The chain is Argininosuccinate lyase from Ehrlichia ruminantium (strain Gardel).